The primary structure comprises 312 residues: Ribosomal protein L11 methyltransferase (312 aa).

4 residues coordinate S-adenosyl-L-methionine: T160, G181, D203, and N246.

The protein belongs to the methyltransferase superfamily. PrmA family.

Its subcellular location is the cytoplasm. It carries out the reaction L-lysyl-[protein] + 3 S-adenosyl-L-methionine = N(6),N(6),N(6)-trimethyl-L-lysyl-[protein] + 3 S-adenosyl-L-homocysteine + 3 H(+). Functionally, methylates ribosomal protein L11. This chain is Ribosomal protein L11 methyltransferase, found in Staphylococcus saprophyticus subsp. saprophyticus (strain ATCC 15305 / DSM 20229 / NCIMB 8711 / NCTC 7292 / S-41).